The chain runs to 348 residues: Hereditary hemochromatosis protein homolog (348 aa).

A signal peptide spans 1-22 (MGPRARPALFFLILLRTVAAQG). The interval 23-114 (RPPRSHSLRY…IMDNHNHSKE (92 aa)) is alpha-1. Residues 23-306 (RPPRSHSLRY…WEPSLSNTLV (284 aa)) lie on the Extracellular side of the membrane. Asparagine 110, asparagine 130, and asparagine 234 each carry an N-linked (GlcNAc...) asparagine glycan. An alpha-2 region spans residues 115–205 (SHTLQVILGC…ELGRGVLDQQ (91 aa)). Cystine bridges form between cysteine 124–cysteine 187 and cysteine 225–cysteine 282. Residues 206 to 297 (VPPLVKVTHH…GLDQPLTATW (92 aa)) are alpha-3. Residues 207-296 (PPLVKVTHHV…PGLDQPLTAT (90 aa)) form the Ig-like C1-type domain. The interval 298-306 (EPSLSNTLV) is connecting peptide. The helical transmembrane segment at 307–330 (TGVISGIAVCVIIFLIGILFRILR) threads the bilayer. Topologically, residues 331-348 (KRQASRGAMGDYVLAECE) are cytoplasmic.

It belongs to the MHC class I family. As to quaternary structure, binds TFR through the extracellular domain in a pH-dependent manner.

It is found in the cell membrane. In terms of biological role, binds to transferrin receptor (TFR) and reduces its affinity for iron-loaded transferrin. This Rhinoceros unicornis (Greater Indian rhinoceros) protein is Hereditary hemochromatosis protein homolog (HFE).